Here is a 68-residue protein sequence, read N- to C-terminus: Large ribosomal subunit protein bL31 (68 aa).

Zn(2+) is bound by residues C16, C18, C37, and C40.

The protein belongs to the bacterial ribosomal protein bL31 family. Type A subfamily. Part of the 50S ribosomal subunit. Zn(2+) is required as a cofactor.

In terms of biological role, binds the 23S rRNA. This chain is Large ribosomal subunit protein bL31, found in Acidithiobacillus ferrooxidans (strain ATCC 23270 / DSM 14882 / CIP 104768 / NCIMB 8455) (Ferrobacillus ferrooxidans (strain ATCC 23270)).